A 359-amino-acid chain; its full sequence is N-acetyl-gamma-glutamyl-phosphate reductase (359 aa).

The active site involves Cys162.

It belongs to the NAGSA dehydrogenase family. Type 1 subfamily.

It localises to the cytoplasm. It catalyses the reaction N-acetyl-L-glutamate 5-semialdehyde + phosphate + NADP(+) = N-acetyl-L-glutamyl 5-phosphate + NADPH + H(+). It functions in the pathway amino-acid biosynthesis; L-arginine biosynthesis; N(2)-acetyl-L-ornithine from L-glutamate: step 3/4. Catalyzes the NADPH-dependent reduction of N-acetyl-5-glutamyl phosphate to yield N-acetyl-L-glutamate 5-semialdehyde. This is N-acetyl-gamma-glutamyl-phosphate reductase from Prochlorococcus marinus (strain NATL2A).